The sequence spans 120 residues: Large ribosomal subunit protein uL22 (120 aa).

Belongs to the universal ribosomal protein uL22 family. As to quaternary structure, part of the 50S ribosomal subunit.

Its function is as follows. This protein binds specifically to 23S rRNA; its binding is stimulated by other ribosomal proteins, e.g. L4, L17, and L20. It is important during the early stages of 50S assembly. It makes multiple contacts with different domains of the 23S rRNA in the assembled 50S subunit and ribosome. Functionally, the globular domain of the protein is located near the polypeptide exit tunnel on the outside of the subunit, while an extended beta-hairpin is found that lines the wall of the exit tunnel in the center of the 70S ribosome. This chain is Large ribosomal subunit protein uL22, found in Corynebacterium urealyticum (strain ATCC 43042 / DSM 7109).